We begin with the raw amino-acid sequence, 400 residues long: Acetyl-CoA decarbonylase/synthase complex subunit delta (400 aa).

The protein belongs to the CdhD family. In terms of assembly, heterodimer of delta and gamma chains. The ACDS complex is made up of alpha, epsilon, beta, gamma and delta chains with a probable stoichiometry of (alpha(2)epsilon(2))(4)-beta(8)-(gamma(1)delta(1))(8).

Functionally, part of a complex that catalyzes the reversible cleavage of acetyl-CoA, allowing autotrophic growth from CO(2). Probably maintains the overall quaternary structure of the ACDS complex. The chain is Acetyl-CoA decarbonylase/synthase complex subunit delta from Methanopyrus kandleri (strain AV19 / DSM 6324 / JCM 9639 / NBRC 100938).